We begin with the raw amino-acid sequence, 358 residues long: B3 domain-containing protein Os12g0592300 (358 aa).

The segment at residues 25–122 (RIRFFRLMTG…SFDVLIFDAS (98 aa)) is a DNA-binding region (TF-B3 1). Residues 148–215 (YHLSDSEDTS…EKSDDDDEHA (68 aa)) are disordered. The segment covering 156-181 (TSTPSTFLVGSPHKASTSKKLNGKTK) has biased composition (polar residues). Residues 203–215 (IEEEKSDDDDEHA) are compositionally biased toward acidic residues. Residues 252–350 (FVTVLQAPQI…TMTVHVIGKV (99 aa)) constitute a DNA-binding region (TF-B3 2).

It localises to the nucleus. The sequence is that of B3 domain-containing protein Os12g0592300 from Oryza sativa subsp. japonica (Rice).